A 675-amino-acid polypeptide reads, in one-letter code: Heat shock 70 kDa protein 12A (675 aa).

Residues 1 to 13 (MADKEAGGSDGPR) show a composition bias toward basic and acidic residues. Residues 1–45 (MADKEAGGSDGPRETAPTSAYSSPARSLGDTGITPLSPSHIVNDT) are disordered. Position 2 is an N-acetylalanine (Ala-2). Composition is skewed to polar residues over residues 16-25 (APTSAYSSPA) and 34-45 (TPLSPSHIVNDT).

The protein belongs to the heat shock protein 70 family. In terms of assembly, interacts with SORL1 (via cytosolic C-terminus); this interaction affects SORL1 internalization and subcellular localization. Widely expressed with highest levels in brain, kidney and muscle.

Its subcellular location is the cytoplasm. The protein localises to the nucleus. Adapter protein for SORL1, but not SORT1. Delays SORL1 internalization and affects SORL1 subcellular localization. The polypeptide is Heat shock 70 kDa protein 12A (HSPA12A) (Homo sapiens (Human)).